Consider the following 948-residue polypeptide: Protocadherin alpha-10 (948 aa).

The first 28 residues, 1–28, serve as a signal peptide directing secretion; the sequence is MVSRCSCLGVQCLLLSLLLLAAWEVGSG. Cadherin domains are found at residues 29 to 132, 133 to 241, 242 to 349, 350 to 454, 455 to 564, and 587 to 689; these read QLHY…PPRF, SVTE…APIF, DRPV…SPEV, IVTS…APAF, AQPE…APAL, and GHVV…APEV. The Extracellular portion of the chain corresponds to 29 to 695; that stretch reads QLHYSVYEEA…APEVALVDVN (667 aa). Residues asparagine 256 and asparagine 264 are each glycosylated (N-linked (GlcNAc...) asparagine). Asparagine 547 carries N-linked (GlcNAc...) asparagine glycosylation. Residues 696-716 form a helical membrane-spanning segment; it reads VYLIIAICAVSSLLVLTLLLY. Residues 717 to 948 lie on the Cytoplasmic side of the membrane; that stretch reads TALRCSAAPT…GNSTTDNSDQ (232 aa). 6 PXXP repeats span residues 732-735, 772-775, 797-800, 830-833, 871-874, and 889-892; these read PVKP, PSLP, PRQP, PGGP, PGNP, and PGSP. A 6 X 4 AA repeats of P-X-X-P region spans residues 732 to 892; it reads PVKPTLVCSS…PDKFIIPGSP (161 aa). Disordered stretches follow at residues 783-804 and 827-948; these read DGED…NPDW and RAGP…NSDQ. Basic and acidic residues predominate over residues 907 to 921; sequence DKSDFITFGKKEETK.

Its subcellular location is the cell membrane. Functionally, potential calcium-dependent cell-adhesion protein. May be involved in the establishment and maintenance of specific neuronal connections in the brain. The polypeptide is Protocadherin alpha-10 (PCDHA10) (Pan troglodytes (Chimpanzee)).